The primary structure comprises 551 residues: Putative transport protein CGSHiGG_02670 (551 aa).

Transmembrane regions (helical) follow at residues 4–24 (IAIT…IGHW), 28–48 (GVGL…HFTN), 65–85 (FGLI…FFSS), 95–115 (AFAI…HKIA), and 157–177 (VSYA…MWLI). 2 consecutive RCK C-terminal domains span residues 191-275 (RFNA…IIGH) and 277-360 (VDAP…VIGN). The next 6 membrane-spanning stretches (helical) occupy residues 370 to 390 (MLPV…PFYI), 402 to 424 (AGGP…LYWF), 438 to 458 (IVLF…DTLV), 463 to 483 (LEWM…VGTI), 492 to 512 (YLTI…LAFA), and 529 to 549 (VYPL…VLLW).

It belongs to the AAE transporter (TC 2.A.81) family. YidE subfamily.

Its subcellular location is the cell membrane. The chain is Putative transport protein CGSHiGG_02670 from Haemophilus influenzae (strain PittGG).